A 222-amino-acid polypeptide reads, in one-letter code: Cell division protein FtsQ (222 aa).

Residues 1–5 (MNKKV) lie on the Cytoplasmic side of the membrane. The helical transmembrane segment at 6 to 26 (IAIVVGVVVVLVAILGVVAWF) threads the bilayer. The Extracellular portion of the chain corresponds to 27 to 222 (VPILKVGNIE…ISSPSMVTVR (196 aa)). One can recognise a POTRA domain in the interval 30 to 98 (LKVGNIEVTG…STITVELTER (69 aa)).

Belongs to the FtsQ/DivIB family. FtsQ subfamily.

Its subcellular location is the cell membrane. Essential cell division protein. The sequence is that of Cell division protein FtsQ from Corynebacterium glutamicum (strain ATCC 13032 / DSM 20300 / JCM 1318 / BCRC 11384 / CCUG 27702 / LMG 3730 / NBRC 12168 / NCIMB 10025 / NRRL B-2784 / 534).